The following is a 229-amino-acid chain: MKRKNIALIPAAGIGARFGADKPKQYVEIGSKTVLEHTIGIFERHEAVDLTVVVVSPEDTFADKVQTAFPQVRVWKNGGQTRAETVRNGVAKLLETGLAAETDNILVHDAARCCLPSEALTRLIEQAGNAAEGGILAIPVADTLKCADGGNISATVERTSLWQAQTPQLFRAGLLHRALAAENLDGITDEASAVEKLGIRPLLVQGDARNLKLTQPQDAYIVRLLLDAV.

The protein belongs to the IspD/TarI cytidylyltransferase family. IspD subfamily.

The enzyme catalyses 2-C-methyl-D-erythritol 4-phosphate + CTP + H(+) = 4-CDP-2-C-methyl-D-erythritol + diphosphate. It participates in isoprenoid biosynthesis; isopentenyl diphosphate biosynthesis via DXP pathway; isopentenyl diphosphate from 1-deoxy-D-xylulose 5-phosphate: step 2/6. In terms of biological role, catalyzes the formation of 4-diphosphocytidyl-2-C-methyl-D-erythritol from CTP and 2-C-methyl-D-erythritol 4-phosphate (MEP). The protein is 2-C-methyl-D-erythritol 4-phosphate cytidylyltransferase of Neisseria meningitidis serogroup A / serotype 4A (strain DSM 15465 / Z2491).